A 145-amino-acid polypeptide reads, in one-letter code: D-aminoacyl-tRNA deacylase (145 aa).

The short motif at 137–138 (GP) is the Gly-cisPro motif, important for rejection of L-amino acids element.

Belongs to the DTD family. Homodimer.

The protein resides in the cytoplasm. The enzyme catalyses glycyl-tRNA(Ala) + H2O = tRNA(Ala) + glycine + H(+). It catalyses the reaction a D-aminoacyl-tRNA + H2O = a tRNA + a D-alpha-amino acid + H(+). An aminoacyl-tRNA editing enzyme that deacylates mischarged D-aminoacyl-tRNAs. Also deacylates mischarged glycyl-tRNA(Ala), protecting cells against glycine mischarging by AlaRS. Acts via tRNA-based rather than protein-based catalysis; rejects L-amino acids rather than detecting D-amino acids in the active site. By recycling D-aminoacyl-tRNA to D-amino acids and free tRNA molecules, this enzyme counteracts the toxicity associated with the formation of D-aminoacyl-tRNA entities in vivo and helps enforce protein L-homochirality. The chain is D-aminoacyl-tRNA deacylase from Shewanella baltica (strain OS195).